Here is a 242-residue protein sequence, read N- to C-terminus: Demethylmenaquinone methyltransferase (242 aa).

S-adenosyl-L-methionine-binding positions include Thr62, Asp83, and Asp112–Val113.

Belongs to the class I-like SAM-binding methyltransferase superfamily. MenG/UbiE family.

The enzyme catalyses a 2-demethylmenaquinol + S-adenosyl-L-methionine = a menaquinol + S-adenosyl-L-homocysteine + H(+). Its pathway is quinol/quinone metabolism; menaquinone biosynthesis; menaquinol from 1,4-dihydroxy-2-naphthoate: step 2/2. In terms of biological role, methyltransferase required for the conversion of demethylmenaquinol (DMKH2) to menaquinol (MKH2). In Protochlamydia amoebophila (strain UWE25), this protein is Demethylmenaquinone methyltransferase.